Reading from the N-terminus, the 103-residue chain is ATP synthase F(0) complex subunit g, mitochondrial (103 aa).

Position 2 is an N-acetylalanine (Ala-2). N6-acetyllysine occurs at positions 11, 24, 35, and 54.

Belongs to the ATPase g subunit family. As to quaternary structure, component of the ATP synthase complex composed at least of ATP5F1A/subunit alpha, ATP5F1B/subunit beta, ATP5MC1/subunit c (homooctomer), MT-ATP6/subunit a, MT-ATP8/subunit 8, ATP5ME/subunit e, ATP5MF/subunit f, ATP5MG/subunit g, ATP5MK/subunit k, ATP5MJ/subunit j, ATP5F1C/subunit gamma, ATP5F1D/subunit delta, ATP5F1E/subunit epsilon, ATP5PF/subunit F6, ATP5PB/subunit b, ATP5PD/subunit d, ATP5PO/subunit OSCP. ATP synthase complex consists of a soluble F(1) head domain (subunits alpha(3) and beta(3)) - the catalytic core - and a membrane F(0) domain - the membrane proton channel (subunits c, a, 8, e, f, g, k and j). These two domains are linked by a central stalk (subunits gamma, delta, and epsilon) rotating inside the F1 region and a stationary peripheral stalk (subunits F6, b, d, and OSCP).

The protein localises to the mitochondrion. Its subcellular location is the mitochondrion inner membrane. Its function is as follows. Subunit g, of the mitochondrial membrane ATP synthase complex (F(1)F(0) ATP synthase or Complex V) that produces ATP from ADP in the presence of a proton gradient across the membrane which is generated by electron transport complexes of the respiratory chain. ATP synthase complex consist of a soluble F(1) head domain - the catalytic core - and a membrane F(1) domain - the membrane proton channel. These two domains are linked by a central stalk rotating inside the F(1) region and a stationary peripheral stalk. During catalysis, ATP synthesis in the catalytic domain of F(1) is coupled via a rotary mechanism of the central stalk subunits to proton translocation. In vivo, can only synthesize ATP although its ATP hydrolase activity can be activated artificially in vitro. Part of the complex F(0) domain. This is ATP synthase F(0) complex subunit g, mitochondrial from Pongo abelii (Sumatran orangutan).